The chain runs to 152 residues: Sec-independent protein translocase protein TatB (152 aa).

A helical transmembrane segment spans residues 1-21 (MFDVAPSELLLVAVVALVVIG). Residues 60 to 71 (EDMEKRWAEENA) are compositionally biased toward basic and acidic residues. The interval 60 to 152 (EDMEKRWAEE…KEADQQEKQS (93 aa)) is disordered. Low complexity-rich tracts occupy residues 84-98 (TASTSSPATPSPVSD) and 124-140 (AANHTETTATTAASTPA). Over residues 141–152 (KPKEADQQEKQS) the composition is skewed to basic and acidic residues.

This sequence belongs to the TatB family. The Tat system comprises two distinct complexes: a TatABC complex, containing multiple copies of TatA, TatB and TatC subunits, and a separate TatA complex, containing only TatA subunits. Substrates initially bind to the TatABC complex, which probably triggers association of the separate TatA complex to form the active translocon.

Its subcellular location is the cell inner membrane. In terms of biological role, part of the twin-arginine translocation (Tat) system that transports large folded proteins containing a characteristic twin-arginine motif in their signal peptide across membranes. Together with TatC, TatB is part of a receptor directly interacting with Tat signal peptides. TatB may form an oligomeric binding site that transiently accommodates folded Tat precursor proteins before their translocation. In Zymomonas mobilis subsp. mobilis (strain ATCC 31821 / ZM4 / CP4), this protein is Sec-independent protein translocase protein TatB.